The sequence spans 258 residues: Uroplakin-1a (258 aa).

Residues 1–14 (MASAAAATTEKGSP) lie on the Cytoplasmic side of the membrane. A helical transmembrane segment spans residues 15–35 (VVVGLLVMGNIIILLSGLALF). The Extracellular portion of the chain corresponds to 36–59 (AETVWVTADQYRIYPLMGVSGKDD). Residues 60-86 (VFAGAWIAIFCGFSFFVVASFGVGAAL) traverse the membrane as a helical segment. The Cytoplasmic portion of the chain corresponds to 87–91 (CRRRS). The chain crosses the membrane as a helical span at residues 92-112 (MILTYLILMLIIYIFECASCI). Topologically, residues 113-230 (TSYTHRDYMV…HIGHAIDSYT (118 aa)) are extracellular. N-linked (GlcNAc...) asparagine glycosylation occurs at Asn-170. Residues 231 to 252 (WGISWFGFAILMWTLPVMLIAM) form a helical membrane-spanning segment. Over 253-258 (YFYTTL) the chain is Cytoplasmic.

It belongs to the tetraspanin (TM4SF) family. In terms of assembly, homodimer; disulfide-linked. Interacts with uroplakin-2 (UPK2). Post-translationally, the N-terminus is blocked. In terms of processing, N-glycosylated with high-mannose oligosaccharides. As to expression, bladder epithelium.

The protein localises to the membrane. Component of the asymmetric unit membrane (AUM); a highly specialized biomembrane elaborated by terminally differentiated urothelial cells. May play an important role in normal bladder epithelial physiology, possibly in regulating membrane permeability of superficial umbrella cells or in stabilizing the apical membrane through AUM/cytoskeletal interactions. This Bos taurus (Bovine) protein is Uroplakin-1a (UPK1A).